The following is a 791-amino-acid chain: FHF complex subunit HOOK-interacting protein 1B (791 aa).

2 disordered regions span residues 465 to 510 (APSP…VPRP) and 524 to 556 (SLGG…SPAE). S467 bears the Phosphoserine mark. Residues 496–510 (SPSVDSSSVVTVPRP) are compositionally biased toward low complexity. Residues S524, S537, S543, S547, and S679 each carry the phosphoserine modification. The segment covering 541-552 (TASPTSSPGRRP) has biased composition (low complexity). T708 bears the Phosphothreonine mark. S716 carries the phosphoserine modification.

Belongs to the FHIP family. In terms of assembly, component of the FTS/Hook/FHIP complex (FHF complex), composed of AKTIP/FTS, FHIP1B, and one or more members of the Hook family of proteins HOOK1, HOOK2, and HOOK3. The FHF complex associates with the homotypic vesicular sorting complex (the HOPS complex).

Component of the FTS/Hook/FHIP complex (FHF complex). The FHF complex may function to promote vesicle trafficking and/or fusion via the homotypic vesicular protein sorting complex (the HOPS complex). FHF complex promotes the distribution of AP-4 complex to the perinuclear area of the cell. This is FHF complex subunit HOOK-interacting protein 1B (Fhip1b) from Rattus norvegicus (Rat).